The primary structure comprises 412 residues: Subtilisin-like protease 6 (412 aa).

Positions 1 to 20 are cleaved as a signal peptide; that stretch reads MGFITKAIPIVLAALSTVNG. Residues 21-127 constitute a propeptide that is removed on maturation; that stretch reads ARILEAGPHA…VRTTTNGTNL (107 aa). The Inhibitor I9 domain maps to 36–120; the sequence is KYIVVMKKDV…FIEPDFVVRT (85 aa). A Peptidase S8 domain is found at 135–412; it reads SWGLARVGSK…SKLIYNGSGK (278 aa). Active-site charge relay system residues include Asp167 and His198. N-linked (GlcNAc...) asparagine glycosylation is found at Asn252 and Asn264. Ser358 acts as the Charge relay system in catalysis. N-linked (GlcNAc...) asparagine glycosylation occurs at Asn408.

It belongs to the peptidase S8 family.

The protein localises to the secreted. Its function is as follows. Secreted subtilisin-like serine protease with keratinolytic activity that contributes to pathogenicity. This is Subtilisin-like protease 6 (SUB6) from Arthroderma benhamiae (strain ATCC MYA-4681 / CBS 112371) (Trichophyton mentagrophytes).